Reading from the N-terminus, the 1167-residue chain is Putative structural protein VP3 (1167 aa).

The sequence is that of Putative structural protein VP3 (S3) from Fiji disease virus (isolate Sugarcane) (FDV).